A 729-amino-acid polypeptide reads, in one-letter code: Fatty acid oxidation complex subunit alpha (729 aa).

The segment at 1 to 189 (MLYKGDTLYL…KIGLVDGVVK (189 aa)) is enoyl-CoA hydratase/isomerase. Residue aspartate 296 participates in substrate binding. A 3-hydroxyacyl-CoA dehydrogenase region spans residues 311–729 (ETPKQAAVLG…ARPVGDLKTA (419 aa)). NAD(+) is bound by residues methionine 324, aspartate 343, 400 to 402 (VVE), lysine 407, and serine 429. Histidine 450 serves as the catalytic For 3-hydroxyacyl-CoA dehydrogenase activity. Residue asparagine 453 participates in NAD(+) binding. The substrate site is built by asparagine 500 and tyrosine 660. The tract at residues 708–729 (RHNEPYYPPVEPARPVGDLKTA) is disordered.

This sequence in the N-terminal section; belongs to the enoyl-CoA hydratase/isomerase family. It in the C-terminal section; belongs to the 3-hydroxyacyl-CoA dehydrogenase family. In terms of assembly, heterotetramer of two alpha chains (FadB) and two beta chains (FadA).

The enzyme catalyses a (3S)-3-hydroxyacyl-CoA + NAD(+) = a 3-oxoacyl-CoA + NADH + H(+). The catalysed reaction is a (3S)-3-hydroxyacyl-CoA = a (2E)-enoyl-CoA + H2O. It carries out the reaction a 4-saturated-(3S)-3-hydroxyacyl-CoA = a (3E)-enoyl-CoA + H2O. It catalyses the reaction (3S)-3-hydroxybutanoyl-CoA = (3R)-3-hydroxybutanoyl-CoA. The enzyme catalyses a (3Z)-enoyl-CoA = a 4-saturated (2E)-enoyl-CoA. The catalysed reaction is a (3E)-enoyl-CoA = a 4-saturated (2E)-enoyl-CoA. It functions in the pathway lipid metabolism; fatty acid beta-oxidation. Involved in the aerobic and anaerobic degradation of long-chain fatty acids via beta-oxidation cycle. Catalyzes the formation of 3-oxoacyl-CoA from enoyl-CoA via L-3-hydroxyacyl-CoA. It can also use D-3-hydroxyacyl-CoA and cis-3-enoyl-CoA as substrate. This Escherichia coli O6:H1 (strain CFT073 / ATCC 700928 / UPEC) protein is Fatty acid oxidation complex subunit alpha.